The chain runs to 294 residues: UPF0761 membrane protein YPTB0027 (294 aa).

Helical transmembrane passes span 44 to 64 (LLSL…FPMF), 67 to 87 (ISIK…GDII), 108 to 128 (GLIV…NIIW), 136 to 156 (LVFS…LVGA), 185 to 205 (VFPL…VPTV), 212 to 232 (ALIG…GFAM), and 246 to 266 (VLAV…IVLL).

It belongs to the UPF0761 family.

It is found in the cell inner membrane. This is UPF0761 membrane protein YPTB0027 from Yersinia pseudotuberculosis serotype I (strain IP32953).